We begin with the raw amino-acid sequence, 273 residues long: Protein BRANCHLESS TRICHOME (273 aa).

Positions 1-12 are enriched in polar residues; that stretch reads MKDMKMQSSPET. Positions 1–30 are disordered; that stretch reads MKDMKMQSSPETMMTRIPTPDPHSTGVRED. Residues 69 to 199 adopt a coiled-coil conformation; that stretch reads IKVFMESELG…GERERNRMMK (131 aa).

As to quaternary structure, interacts with STI.

Its function is as follows. Acts as a key regulator of trichome branching. Could participate with STI in the same pathway. Also plays a role in integrating endoreplication levels with cell shape. This is Protein BRANCHLESS TRICHOME (BLT) from Arabidopsis thaliana (Mouse-ear cress).